The primary structure comprises 158 residues: MSYTVIYAGTFDPMTNGHLDIIERASELFGQVIVAVAKNPSKQPLFSLEERTALVRQSCAHLANVQAVGFSGLLADFAKQHQAKALVRGIRGSDDIEYEIQLAQLNDKLSGRLDTVFLPPSVTWRYLSSTMVREIYRHQGDVAQFVPNAVLCALKEKE.

Threonine 10 provides a ligand contact to substrate. ATP is bound by residues 10 to 11 and histidine 18; that span reads TF. Substrate is bound by residues lysine 42, leucine 74, and arginine 88. ATP contacts are provided by residues 89–91, glutamate 99, and 124–130; these read GIR and WRYLSST.

This sequence belongs to the bacterial CoaD family. Homohexamer. Requires Mg(2+) as cofactor.

The protein resides in the cytoplasm. The catalysed reaction is (R)-4'-phosphopantetheine + ATP + H(+) = 3'-dephospho-CoA + diphosphate. Its pathway is cofactor biosynthesis; coenzyme A biosynthesis; CoA from (R)-pantothenate: step 4/5. In terms of biological role, reversibly transfers an adenylyl group from ATP to 4'-phosphopantetheine, yielding dephospho-CoA (dPCoA) and pyrophosphate. The polypeptide is Phosphopantetheine adenylyltransferase (Actinobacillus pleuropneumoniae serotype 3 (strain JL03)).